Here is a 186-residue protein sequence, read N- to C-terminus: Intraflagellar transport protein 27 homolog (186 aa).

GTP contacts are provided by residues 12 to 19 (GDPAVGKT), 64 to 68 (DSAGK), and 123 to 126 (NKTD).

This sequence belongs to the small GTPase superfamily. Rab family. As to quaternary structure, component of the IFT complex B, at least composed of IFT20, IFT25, IFT27, IFT52, IFT57, IFT74, IFT81, IFT88 and TRAF3IP1. Interacts with IFT25. Interacts with IFT70B. Interacts with RABL2/RABL2A; binding is equal in the presence of GTP or GDP. Interacts with ARL6; recognizes and binds with the GTP-free form of ARL6.

Its subcellular location is the cell projection. The protein localises to the cilium. It localises to the cytoplasm. The protein resides in the flagellum. Its function is as follows. Small GTPase-like component of the intraflagellar transport (IFT) complex B that promotes the exit of the BBSome complex from cilia via its interaction with ARL6. Not involved in entry of the BBSome complex into cilium. Prevents aggregation of GTP-free ARL6. Required for hedgehog signaling. Forms a subcomplex within the IFT complex B with IFT25. Its role in intraflagellar transport is mainly seen in tissues rich in ciliated cells such as kidney and testis. Essential for male fertility, spermiogenesis and sperm flagella formation. Plays a role in the early development of the kidney. May be involved in the regulation of ureteric bud initiation. This Homo sapiens (Human) protein is Intraflagellar transport protein 27 homolog (IFT27).